The following is a 777-amino-acid chain: Gliding motility regulatory protein (777 aa).

The 108-residue stretch at 1 to 108 folds into the HPt domain; that stretch reads MDTEALKKSL…SDLNEDLSGA (108 aa). His49 bears the Phosphohistidine; by autocatalysis mark. Disordered stretches follow at residues 129-149 and 164-212; these read TPPA…PPAP and PAPV…KSAV. Composition is skewed to pro residues over residues 139–149 and 164–177; these read VAPPPAPPPAP and PAPV…PPTQ. Low complexity predominate over residues 178-197; it reads APVAEPGAHAAAAAPHPAAA. Residues 270-509 form the Histidine kinase domain; sequence DISNEVREQL…TITLRLPQSL (240 aa). The CheW-like domain occupies 511–645; the sequence is LMKVLLVRLG…VPDIMAEVRR (135 aa). A Response regulatory domain is found at 660 to 776; the sequence is RVLLVDDSPI…EVLAQAIDRL (117 aa). Asp709 is subject to 4-aspartylphosphate.

It carries out the reaction ATP + protein L-histidine = ADP + protein N-phospho-L-histidine.. Its function is as follows. FrzE is involved in a sensory transduction pathway that controls the frequency at which cells reverse their gliding direction. FrzE seems to be capable of autophosphorylating itself on a histidine residue and then to transfer that group to an aspartate residue in the C-terminal part of the protein. This is Gliding motility regulatory protein (frzE) from Myxococcus xanthus.